Consider the following 360-residue polypeptide: Peptide chain release factor 1 (360 aa).

Q235 carries the N5-methylglutamine modification. The segment covering 280 to 293 (DKQSHEQQAKEAAT) has biased composition (basic and acidic residues). A disordered region spans residues 280–300 (DKQSHEQQAKEAATRKSLIGS).

This sequence belongs to the prokaryotic/mitochondrial release factor family. In terms of processing, methylated by PrmC. Methylation increases the termination efficiency of RF1.

It is found in the cytoplasm. Its function is as follows. Peptide chain release factor 1 directs the termination of translation in response to the peptide chain termination codons UAG and UAA. The protein is Peptide chain release factor 1 of Paraburkholderia phytofirmans (strain DSM 17436 / LMG 22146 / PsJN) (Burkholderia phytofirmans).